We begin with the raw amino-acid sequence, 151 residues long: Small ribosomal subunit protein uS15 (151 aa).

Belongs to the universal ribosomal protein uS15 family.

The chain is Small ribosomal subunit protein uS15 (RPS13) from Agaricus bisporus (White button mushroom).